Consider the following 257-residue polypeptide: Ditrans,polycis-undecaprenyl-diphosphate synthase ((2E,6E)-farnesyl-diphosphate specific) (257 aa).

D34 is a catalytic residue. Mg(2+) is bound at residue D34. Substrate is bound by residues G35–R38, W39, R47, and H51. Residue N82 is the Proton acceptor of the active site. Substrate is bound by residues W83, R85, R201, and R207–S209. E220 is a Mg(2+) binding site.

This sequence belongs to the UPP synthase family. As to quaternary structure, homodimer. Requires Mg(2+) as cofactor.

It carries out the reaction 8 isopentenyl diphosphate + (2E,6E)-farnesyl diphosphate = di-trans,octa-cis-undecaprenyl diphosphate + 8 diphosphate. Its function is as follows. Catalyzes the sequential condensation of isopentenyl diphosphate (IPP) with (2E,6E)-farnesyl diphosphate (E,E-FPP) to yield (2Z,6Z,10Z,14Z,18Z,22Z,26Z,30Z,34E,38E)-undecaprenyl diphosphate (di-trans,octa-cis-UPP). UPP is the precursor of glycosyl carrier lipid in the biosynthesis of bacterial cell wall polysaccharide components such as peptidoglycan and lipopolysaccharide. The polypeptide is Ditrans,polycis-undecaprenyl-diphosphate synthase ((2E,6E)-farnesyl-diphosphate specific) (Francisella tularensis subsp. tularensis (strain SCHU S4 / Schu 4)).